The chain runs to 137 residues: MERTLAIIKPDAFAAGHAGGILARIYEEGFRVIGMKKLALSEKQAAGFYYVHEGKPFFDDLKGFMSSGPCVVMVLEADGAIRKWRDLMGATNPADAAAGTLRKEFGTSLGRNAVHGSDAPETAAFEVGYFFAGLDLL.

ATP is bound by residues K9, F57, R85, T91, R102, and N112. Catalysis depends on H115, which acts as the Pros-phosphohistidine intermediate.

This sequence belongs to the NDK family. In terms of assembly, homotetramer. The cofactor is Mg(2+).

The protein resides in the cytoplasm. The enzyme catalyses a 2'-deoxyribonucleoside 5'-diphosphate + ATP = a 2'-deoxyribonucleoside 5'-triphosphate + ADP. The catalysed reaction is a ribonucleoside 5'-diphosphate + ATP = a ribonucleoside 5'-triphosphate + ADP. Major role in the synthesis of nucleoside triphosphates other than ATP. The ATP gamma phosphate is transferred to the NDP beta phosphate via a ping-pong mechanism, using a phosphorylated active-site intermediate. This is Nucleoside diphosphate kinase from Syntrophotalea carbinolica (strain DSM 2380 / NBRC 103641 / GraBd1) (Pelobacter carbinolicus).